The chain runs to 892 residues: Putative VWFA domain-containing protein ORF892 (892 aa).

The disordered stretch occupies residues 109 to 548; sequence EEQLQRRPQR…RGYAHGDEDL (440 aa). Residues 129–142 are compositionally biased toward polar residues; the sequence is SEVANQRVSRSAEN. Positions 143–162 are enriched in basic and acidic residues; it reads QGKRGNEEKQQQKTPGKTEE. Acidic residues predominate over residues 169–184; the sequence is ESGEEGNQQEESGEEQ. The span at 185-196 shows a compositional bias: basic and acidic residues; the sequence is EGVKGSRSKQRE. The span at 212 to 223 shows a compositional bias: acidic residues; sequence ESGESESEEGQS. 2 stretches are compositionally biased toward low complexity: residues 224–238 and 271–283; these read SEET…GNQQ and GNGQ…AQNG. A compositionally biased stretch (acidic residues) spans 287-300; that stretch reads GESEGEITESESAS. Over residues 301–323 the composition is skewed to low complexity; sequence EEQTGSKGKSGQQGEEGQQQSGS. 2 stretches are compositionally biased toward acidic residues: residues 324–336 and 425–448; these read EGEE…ESGE and SESE…ETEE. Residues 453-466 are compositionally biased toward low complexity; sequence SEAEGTAAEGEVGQ. 2 stretches are compositionally biased toward polar residues: residues 467 to 481 and 512 to 531; these read PSEQ…SGQR and QTGS…QQGE. Residues 536–546 are compositionally biased toward basic and acidic residues; the sequence is EGGRGYAHGDE. Residues 553–620 adopt a coiled-coil conformation; the sequence is QEINSILQTL…VQKLLKDLNV (68 aa). In terms of domain architecture, VWFA spans 723–892; that stretch reads DFLFVIDSSG…GNIVLKRLVH (170 aa).

This Acidianus two-tailed virus (ATV) protein is Putative VWFA domain-containing protein ORF892.